The primary structure comprises 857 residues: Leucine-rich repeat extensin-like protein 5 (857 aa).

Positions 1 to 31 (MKTKMMMKNTSLIFVLLFITFFFTSISYSLS) are cleaved as a signal peptide. An LRR 1 repeat occupies 32-53 (LTFNGDLSDNEVRLITQRQLLY). A glycan (N-linked (GlcNAc...) asparagine) is linked at Asn-98. LRR repeat units follow at residues 125-149 (IRTVAGIDLNHADIAGYLPQELGLL), 150-172 (TDLALFHINSNRFCGTVPHRFNR), 174-197 (KLLFELDLSNNRFAGIFPTVVLQL), 198-221 (PSLKFLDLRFNEFEGPVPRELFSK), 223-244 (LDAIFINHNRFRFELPDNLGDS), 246-267 (VSVIVVANNHFHGCIPTSLGDM), 268-291 (RNLEEIIFMENGFNSCLPSQIGRL), 292-315 (KNVTVFDFSFNELVGSLPASIGGM), 316-339 (VSMEQLNVAHNRFSGKIPATICQL), and 341-362 (RLENFTFSYNFFTGEPPVCLGL). Residue Asn-293 is glycosylated (N-linked (GlcNAc...) asparagine). N-linked (GlcNAc...) asparagine glycosylation is present at Asn-344. Disordered regions lie at residues 406-776 (PPVV…EYSP) and 817-839 (YSPPPPPVIHHSQPPPPPIYEGP). 2 stretches are compositionally biased toward pro residues: residues 408–571 (VVVP…PTPI) and 579–768 (PIIP…PQSH). Residues 615–857 (SPPPSTPTPV…YASPPPPPFY (243 aa)) form a contains the Ser-Pro(4) repeats region.

In terms of processing, hydroxylated on proline residues in the S-P-P-P-P repeat. O-glycosylated on hydroxyprolines. As to expression, expressed in roots, leaves and flowers.

The protein resides in the secreted. It localises to the cell wall. Functionally, modulates cell morphogenesis by regulating cell wall formation and assembly, and/or growth polarization. The polypeptide is Leucine-rich repeat extensin-like protein 5 (LRX5) (Arabidopsis thaliana (Mouse-ear cress)).